A 328-amino-acid chain; its full sequence is D-cysteine desulfhydrase (328 aa).

The residue at position 51 (lysine 51) is an N6-(pyridoxal phosphate)lysine.

It belongs to the ACC deaminase/D-cysteine desulfhydrase family. In terms of assembly, homodimer. The cofactor is pyridoxal 5'-phosphate.

It carries out the reaction D-cysteine + H2O = hydrogen sulfide + pyruvate + NH4(+) + H(+). In terms of biological role, catalyzes the alpha,beta-elimination reaction of D-cysteine and of several D-cysteine derivatives. It could be a defense mechanism against D-cysteine. This is D-cysteine desulfhydrase from Escherichia fergusonii (strain ATCC 35469 / DSM 13698 / CCUG 18766 / IAM 14443 / JCM 21226 / LMG 7866 / NBRC 102419 / NCTC 12128 / CDC 0568-73).